The chain runs to 851 residues: Protein NUD1 (851 aa).

2 disordered regions span residues 1–31 (MDMDTQEAELSSQLENLTINSPRKLRSNAHS) and 216–352 (LVGS…KAPS). Residues 8 to 21 (AELSSQLENLTINS) show a composition bias toward polar residues. Composition is skewed to low complexity over residues 223–246 (NSNNKNNNNNNNNNNNNSININNK) and 260–278 (SNSFEFSSSSSMSSSQTQS). Polar residues predominate over residues 291-304 (NTISPGQLGYQFNH). A compositionally biased stretch (low complexity) spans 320–333 (SSSHSLDNTSSNQS). Residue K357 forms a Glycyl lysine isopeptide (Lys-Gly) (interchain with G-Cter in ubiquitin) linkage. T388 and T392 each carry phosphothreonine. Phosphoserine is present on residues S417 and S419. 5 LRR repeats span residues 544 to 566 (DLECLDLSYNLLNTSLKFLSLCH), 567 to 588 (HLQEVNLSYNSIQSLEGIGSSR), 589 to 609 (MKKLNLSNNEINGIIDFEQLI), 621 to 642 (TVEVLDLSNNNIIGVRNINCLP), and 643 to 664 (RLKVLNLNGNPLVSIVESSKME).

Interacts directly with MPC54, CNM67, SPO21/MPC70, ADY3 and ADY4. Probable component of a spindle pole boby (SPB) complex composed of ADY3, SSP1, DON1, MPC54, SPO21/MPC70, NUD1 and CNM67. In terms of processing, phosphorylated from S/G2 phase until the end of mitosis.

It is found in the cytoplasm. Its subcellular location is the cytoskeleton. It localises to the microtubule organizing center. The protein resides in the spindle pole body. The protein localises to the nucleus envelope. Functionally, involved in astral microtubule organization by binding SCP72 to the outer plaque in a cell-cycle dependent manner. Required for the mitotic exit by facilitating the binding of TEMP1 to CDC15. Also involved in the pathway that organizes the shaping and sizing of the prospore membrane (PSM) during sporulation. In Saccharomyces cerevisiae (strain ATCC 204508 / S288c) (Baker's yeast), this protein is Protein NUD1 (NUD1).